Here is a 129-residue protein sequence, read N- to C-terminus: Small ribosomal subunit protein uS11 (129 aa).

This sequence belongs to the universal ribosomal protein uS11 family. Part of the 30S ribosomal subunit. Interacts with proteins S7 and S18. Binds to IF-3.

Functionally, located on the platform of the 30S subunit, it bridges several disparate RNA helices of the 16S rRNA. Forms part of the Shine-Dalgarno cleft in the 70S ribosome. The polypeptide is Small ribosomal subunit protein uS11 (Phenylobacterium zucineum (strain HLK1)).